A 159-amino-acid polypeptide reads, in one-letter code: SsrA-binding protein (159 aa).

The protein belongs to the SmpB family.

It localises to the cytoplasm. Its function is as follows. Required for rescue of stalled ribosomes mediated by trans-translation. Binds to transfer-messenger RNA (tmRNA), required for stable association of tmRNA with ribosomes. tmRNA and SmpB together mimic tRNA shape, replacing the anticodon stem-loop with SmpB. tmRNA is encoded by the ssrA gene; the 2 termini fold to resemble tRNA(Ala) and it encodes a 'tag peptide', a short internal open reading frame. During trans-translation Ala-aminoacylated tmRNA acts like a tRNA, entering the A-site of stalled ribosomes, displacing the stalled mRNA. The ribosome then switches to translate the ORF on the tmRNA; the nascent peptide is terminated with the 'tag peptide' encoded by the tmRNA and targeted for degradation. The ribosome is freed to recommence translation, which seems to be the essential function of trans-translation. The polypeptide is SsrA-binding protein (Frankia casuarinae (strain DSM 45818 / CECT 9043 / HFP020203 / CcI3)).